The chain runs to 395 residues: Phosphoglycerate kinase (395 aa).

Substrate-binding positions include 21 to 23 (DIN), Arg-36, 59 to 62 (HFGR), Arg-114, and Arg-147. ATP-binding positions include Lys-197, Glu-322, and 352–355 (GGDT).

It belongs to the phosphoglycerate kinase family. As to quaternary structure, monomer.

Its subcellular location is the cytoplasm. It carries out the reaction (2R)-3-phosphoglycerate + ATP = (2R)-3-phospho-glyceroyl phosphate + ADP. It participates in carbohydrate degradation; glycolysis; pyruvate from D-glyceraldehyde 3-phosphate: step 2/5. The polypeptide is Phosphoglycerate kinase (Roseobacter denitrificans (strain ATCC 33942 / OCh 114) (Erythrobacter sp. (strain OCh 114))).